The sequence spans 405 residues: Sialic acid transporter NanX (405 aa).

Residues 1-20 lie on the Cytoplasmic side of the membrane; sequence MATAWYKQVNPPQRKALFSA. Residues 21–41 form a helical membrane-spanning segment; the sequence is WLGYVFDGFDFMMIFYILHII. The Periplasmic portion of the chain corresponds to 42-53; it reads KADLGITDIQAT. A helical transmembrane segment spans residues 54–74; it reads LIGTVAFIARPIGGGFFGAMA. The Cytoplasmic portion of the chain corresponds to 75-80; that stretch reads DKYGRK. The helical transmembrane segment at 81-101 threads the bilayer; sequence PMMMWAIFIYSVGTGLSGIAT. Residue Asn-102 is a topological domain, periplasmic. The chain crosses the membrane as a helical span at residues 103-123; the sequence is LYMLAVCRFIVGLGMSGEYAC. Topologically, residues 124–139 are cytoplasmic; that stretch reads ASTYAVESWPKNLQSK. The chain crosses the membrane as a helical span at residues 140–160; that stretch reads ASAFLVSGFSVGNIIAAQIIP. Residues 161–164 are Periplasmic-facing; it reads QFAE. Residues 165 to 185 form a helical membrane-spanning segment; sequence VYGWRNSFFIGLLPVLLVLWI. Topologically, residues 186–214 are cytoplasmic; sequence RKSAPESQEWIEDKYKDKSTFLSVFRKPH. Residues 215 to 235 form a helical membrane-spanning segment; sequence LSISMIVFLVCFCLFGANWPI. The Periplasmic portion of the chain corresponds to 236 to 250; that stretch reads NGLLPSYLADNGVNT. Residues 251-271 traverse the membrane as a helical segment; the sequence is VVISTLMTIAGLGTLTGTIFF. The Cytoplasmic portion of the chain corresponds to 272–282; that stretch reads GFVGDKIGVKK. The helical transmembrane segment at 283–303 threads the bilayer; sequence AFVVGLITSFIFLCPLFFISV. Residues 304 to 307 are Periplasmic-facing; that stretch reads KNSS. A helical membrane pass occupies residues 308–328; the sequence is LIGLCLFGLMFTNLGIAGLVP. Topologically, residues 329–344 are cytoplasmic; that stretch reads KFIYDYFPTKLRGLGT. Residues 345–365 traverse the membrane as a helical segment; sequence GLIYNLGATGGMAAPVLATYI. Over 366-371 the chain is Periplasmic; the sequence is SGYYGL. A helical transmembrane segment spans residues 372-392; that stretch reads GVSLFIVTVAFSALLILLVGF. Topologically, residues 393 to 405 are cytoplasmic; it reads DIPGKIYKLSVAK.

The protein belongs to the major facilitator superfamily. Sugar transporter (TC 2.A.1.1) family.

It localises to the cell inner membrane. In terms of biological role, probably transports across the inner membrane the two dehydrated forms of N-acetylneuraminate (Neu5Ac), 2,7-anhydro-N-acetylneuraminate (2,7-AN) and 2-deoxy-2,3-didehydro-N-acetylneuraminate (2,3-EN). This is Sialic acid transporter NanX from Escherichia coli (strain K12).